The chain runs to 273 residues: Formamidopyrimidine-DNA glycosylase (273 aa).

The active-site Schiff-base intermediate with DNA is Pro2. Glu3 acts as the Proton donor in catalysis. Catalysis depends on Lys58, which acts as the Proton donor; for beta-elimination activity. DNA-binding residues include His92, Arg111, and Lys153. The segment at 238-272 (KVYGREGQSCLSCSSTIIKIKHSGRSTFYCKTCQY) adopts an FPG-type zinc-finger fold. The active-site Proton donor; for delta-elimination activity is Arg262.

Belongs to the FPG family. In terms of assembly, monomer. Zn(2+) serves as cofactor.

The enzyme catalyses Hydrolysis of DNA containing ring-opened 7-methylguanine residues, releasing 2,6-diamino-4-hydroxy-5-(N-methyl)formamidopyrimidine.. It carries out the reaction 2'-deoxyribonucleotide-(2'-deoxyribose 5'-phosphate)-2'-deoxyribonucleotide-DNA = a 3'-end 2'-deoxyribonucleotide-(2,3-dehydro-2,3-deoxyribose 5'-phosphate)-DNA + a 5'-end 5'-phospho-2'-deoxyribonucleoside-DNA + H(+). Involved in base excision repair of DNA damaged by oxidation or by mutagenic agents. Acts as a DNA glycosylase that recognizes and removes damaged bases. Has a preference for oxidized purines, such as 7,8-dihydro-8-oxoguanine (8-oxoG). Has AP (apurinic/apyrimidinic) lyase activity and introduces nicks in the DNA strand. Cleaves the DNA backbone by beta-delta elimination to generate a single-strand break at the site of the removed base with both 3'- and 5'-phosphates. The sequence is that of Formamidopyrimidine-DNA glycosylase from Rickettsia peacockii (strain Rustic).